A 1088-amino-acid polypeptide reads, in one-letter code: Insulin receptor substrate 1-B (1088 aa).

Positions 15–117 (DVRKVGYLRK…WYQALVDLHN (103 aa)) constitute a PH domain. Residue Y48 is modified to Phosphotyrosine. The 105-residue stretch at 155 to 259 (FKEVWQVIMK…EAMKALSDEF (105 aa)) folds into the IRS-type PTB domain. The interval 259-428 (FRPRSKSQSS…GGFISSDEYG (170 aa)) is disordered. 4 stretches are compositionally biased toward low complexity: residues 264–278 (KSQSSSNCSNPISVP), 302–312 (SATATSPAGGA), 379–400 (SPSATSPVSLSSSSTSGHGSTS), and 408–420 (SSASISGSPSDGG). S307 carries the phosphoserine modification. Phosphotyrosine; by INSR is present on Y460. Positions 460–463 (YICM) match the YXXM motif 1 motif. Polar residues-rich tracts occupy residues 466 to 479 (SSSHLQRGPQQRYQ) and 499 to 516 (SSGTSPPTVSHQKTPSQS). Disordered stretches follow at residues 466–485 (SSSHLQRGPQQRYQPSRGEE) and 496–516 (RTHSSGTSPPTVSHQKTPSQS). Short sequence motifs (YXXM motif) lie at residues 521–524 (YTEM), 567–570 (YMPM), 584–587 (YMPM), 612–615 (YMMM), and 654–657 (YINM). Residues Y567 and Y584 each carry the phosphotyrosine; by INSR modification. Position 612 is a phosphotyrosine (Y612). The disordered stretch occupies residues 704-785 (NLRISANSGH…PPEPKSPGEY (82 aa)). The span at 707–718 (ISANSGHNLYTE) shows a compositional bias: polar residues. Positions 719–729 (DSSSSSTSSDS) are enriched in low complexity. Phosphotyrosine; by INSR is present on residues Y785 and Y823. Residues 785-787 (YVN) form a GRB2-binding region. Residues 823-826 (YMNM) carry the YXXM motif 7 motif. Over residues 840–863 (TSSYEPPNKPVNSVCPTETCSSSR) the composition is skewed to polar residues. The tract at residues 840-868 (TSSYEPPNKPVNSVCPTETCSSSRPPIRG) is disordered. The residue at position 875 (Y875) is a Phosphotyrosine; by INSR. Short sequence motifs (YXXM motif) lie at residues 875 to 878 (YMSM) and 909 to 912 (YAEM). The interval 935–1006 (ASRSSLLGQG…SGEDVKRHSS (72 aa)) is disordered. Composition is skewed to polar residues over residues 946 to 961 (GPSAFTRVSLSPNRNP) and 980 to 995 (ETFSSTPTTARVTTGP). Y1037 and Y1069 each carry phosphotyrosine; by INSR.

In terms of assembly, interacts with the NPXY motif of tyrosine-phosphorylated igf1r and insr via the PTB domain. Binds to phosphatidylinositol 3-kinase p85 subunit at a low level in vitro prior to phosphorylation. Binding is greatly enhanced following tyrosine phosphorylation by insr and probably occurs via the phosphorylated YXXM motifs. In terms of processing, phosphorylation of Tyr-785 is required for grb2-binding.

In terms of biological role, may mediate the control of various cellular processes by insulin. When phosphorylated by the insulin receptor binds specifically to various cellular proteins containing SH2 domains such as phosphatidylinositol 3-kinase p85 subunit or grb2. Activates phosphatidylinositol 3-kinase when bound to the regulatory p85 subunit. The protein is Insulin receptor substrate 1-B (irs1-b) of Xenopus laevis (African clawed frog).